The primary structure comprises 290 residues: Probable ECF RNA polymerase sigma factor SigI (290 aa).

The tract at residues 11–74 (WRAHRAYLVD…LCLDHIKSAS (64 aa)) is sigma-70 factor domain-2. Residues 34 to 37 (DMVQ) carry the Polymerase core binding motif. Residues 110–162 (LALLIMLERLGPAERVVFVLHEIFGLPYQQIATTIGSQASTCRQLAHRARRKI) are sigma-70 factor domain-4_2. The H-T-H motif DNA-binding region spans 137-156 (YQQIATTIGSQASTCRQLAH).

This sequence belongs to the sigma-70 factor family. ECF subfamily. Interacts transiently with the RNA polymerase catalytic core formed by RpoA, RpoB, RpoC and RpoZ (2 alpha, 1 beta, 1 beta' and 1 omega subunit) to form the RNA polymerase holoenzyme that can initiate transcription.

Functionally, sigma factors are initiation factors that promote the attachment of RNA polymerase to specific initiation sites and are then released. Extracytoplasmic function (ECF) sigma factors are held in an inactive form by a cognate anti-sigma factor until released, although no anti-sigma factor is known for this protein. The sequence is that of Probable ECF RNA polymerase sigma factor SigI (sigI) from Mycobacterium tuberculosis (strain CDC 1551 / Oshkosh).